The sequence spans 412 residues: Acyl-[acyl-carrier-protein] hydrolase FATB2, chloroplastic (412 aa).

Low complexity-rich tracts occupy residues 1-13 and 56-66; these read TAASSAFFPVPSA and GSSVGLKSGGL. The transit peptide at 1-46 directs the protein to the chloroplast; that stretch reads TAASSAFFPVPSADTSSRPGKLGNGPSSFSPLKPKSIPNGGLQVKA. The disordered stretch occupies residues 1–78; that stretch reads TAASSAFFPV…HDDAPSAPPP (78 aa). Catalysis depends on residues asparagine 311, histidine 313, and cysteine 348.

This sequence belongs to the acyl-ACP thioesterase family.

It localises to the plastid. Its subcellular location is the chloroplast. It carries out the reaction tetradecanoyl-[ACP] + H2O = tetradecanoate + holo-[ACP] + H(+). The enzyme catalyses hexadecanoyl-[ACP] + H2O = hexadecanoate + holo-[ACP] + H(+). In terms of biological role, plays an essential role in chain termination during de novo fatty acid synthesis. Possesses thioesterase activity for medium chain acyl-ACPs. Substrate preference is 14:0 &gt; 16:0 &gt; 16:1. This is Acyl-[acyl-carrier-protein] hydrolase FATB2, chloroplastic from Cuphea viscosissima (Blue waxweed).